We begin with the raw amino-acid sequence, 201 residues long: Small ribosomal subunit protein uS4 (201 aa).

The region spanning 91–151 (SRLDNVVYRA…EKSQKMNWFE (61 aa)) is the S4 RNA-binding domain.

It belongs to the universal ribosomal protein uS4 family. As to quaternary structure, part of the 30S ribosomal subunit. Contacts protein S5. The interaction surface between S4 and S5 is involved in control of translational fidelity.

One of the primary rRNA binding proteins, it binds directly to 16S rRNA where it nucleates assembly of the body of the 30S subunit. Its function is as follows. With S5 and S12 plays an important role in translational accuracy. The polypeptide is Small ribosomal subunit protein uS4 (Corynebacterium glutamicum (strain R)).